We begin with the raw amino-acid sequence, 543 residues long: MDDPNQCTIKQEDSITRPRPTEAPTIQNLKQEPAIEEGSSSTMDNMLMLTIDTNQANWQGTYDDDEMDLNNKTDLIPLLETEKTTINEDELYDDEEDDDDDEEIKKGIGFELLAQALGMSAKVPVEKEEPEKERAKLSGVGEFMKQIRGEIKPIQKERIVLDELGFRVRDPSKFPPCRIAEVQQTLTLADHQDGIDLPPPNAPTDVRIVRKLIRQKMVRCKKCKNRFIEKNIYERHLRDKHPDLYEEYIREQEEEVELQRLEEIEANRIEELQTGGFIPPENEISQPSEDPNYIPLPGENNGGLVPRFDYYGRIKQLKRPYKKKVSPQCPFCDKRFRNEFSLKKHFAKKHEEMVEFQQCLKCFKCVENDAEMANHDCELTYVCFECTPIRNLCTDNRLLNHRKKFHRGANSGFRCSFCNMKFLTPRKLRKHKKMSHVFTKTFQCHFCEEIFISEVAVMTHERMHTGIIKFECKVCDFRANRYTAMEEHKRDEHGYVCAICHERHAEYPEMKHHVYEEHGGYLAADEPTAYVETPRMWILYKGE.

The segment at 1–38 is disordered; it reads MDDPNQCTIKQEDSITRPRPTEAPTIQNLKQEPAIEEG. Basic and acidic residues predominate over residues 10–20; that stretch reads KQEDSITRPRP. 7 consecutive C2H2-type zinc fingers follow at residues 218-241, 327-350, 381-406, 413-436, 442-464, 470-493, and 495-518; these read VRCKKCKNRFIEKNIYERHLRDKH, PQCPFCDKRFRNEFSLKKHFAKKH, YVCFECTPIRNLCTDNRLLNHRKKFH, FRCSFCNMKFLTPRKLRKHKKMSH, FQCHFCEEIFISEVAVMTHERMH, FECKVCDFRANRYTAMEEHKRDEH, and YVCAICHERHAEYPEMKHHVYEEH.

Belongs to the krueppel C2H2-type zinc-finger protein family. In terms of assembly, interacts with histone deacetylase hda-1. May interact with nasp-1.

The protein localises to the nucleus. Functionally, probable transcription factor. Promotes normal hermaphrodite (XX) development, in concert with histone deacetylase hda-1 and nasp-1, perhaps as components of a complex. May cooperate with transcription factor tra-1 to repress male-specific genes in hermaphrodites. Synthetic multivulva (synMuv) class B protein, required to repress the induction of vulval development by let-60 Ras signaling. The polypeptide is Zinc finger protein tra-4 (Caenorhabditis elegans).